The sequence spans 516 residues: Phosphatidylserine decarboxylase proenzyme 2, mitochondrial (516 aa).

The N-terminal 21 residues, M1 to G21, are a transit peptide targeting the mitochondrion. Topologically, residues F22 to A33 are mitochondrial matrix. Residues L34–I52 traverse the membrane as a helical segment. Over H53–L516 the chain is Mitochondrial intermembrane. Catalysis depends on charge relay system; for autoendoproteolytic cleavage activity residues D159, H373, and S488. S488 serves as the catalytic Schiff-base intermediate with substrate; via pyruvic acid; for decarboxylase activity. At S488 the chain carries Pyruvic acid (Ser); by autocatalysis.

The protein belongs to the phosphatidylserine decarboxylase family. PSD-B subfamily. Eukaryotic type I sub-subfamily. In terms of assembly, heterodimer of a large membrane-associated beta subunit and a small pyruvoyl-containing alpha subunit. The cofactor is pyruvate. Post-translationally, is synthesized initially as an inactive proenzyme. Formation of the active enzyme involves a self-maturation process in which the active site pyruvoyl group is generated from an internal serine residue via an autocatalytic post-translational modification. Two non-identical subunits are generated from the proenzyme in this reaction, and the pyruvate is formed at the N-terminus of the alpha chain, which is derived from the carboxyl end of the proenzyme. The autoendoproteolytic cleavage occurs by a canonical serine protease mechanism, in which the side chain hydroxyl group of the serine supplies its oxygen atom to form the C-terminus of the beta chain, while the remainder of the serine residue undergoes an oxidative deamination to produce ammonia and the pyruvoyl prosthetic group on the alpha chain. During this reaction, the Ser that is part of the protease active site of the proenzyme becomes the pyruvoyl prosthetic group, which constitutes an essential element of the active site of the mature decarboxylase.

The protein localises to the mitochondrion. It localises to the mitochondrion inner membrane. The protein resides in the nucleus envelope. Its subcellular location is the lipid droplet. It is found in the endoplasmic reticulum membrane. It catalyses the reaction a 1,2-diacyl-sn-glycero-3-phospho-L-serine + H(+) = a 1,2-diacyl-sn-glycero-3-phosphoethanolamine + CO2. The protein operates within phospholipid metabolism; phosphatidylethanolamine biosynthesis; phosphatidylethanolamine from CDP-diacylglycerol: step 2/2. In terms of biological role, catalyzes the formation of phosphatidylethanolamine (PtdEtn) from phosphatidylserine (PtdSer). Plays a central role in phospholipid metabolism and in the interorganelle trafficking of phosphatidylserine. Together with psd1 and psd3, responsible for the majority of phosphatidylethanolamine synthesis. Plays a role in lipid droplet biogenesis at the endoplasmic reticulum membrane. This chain is Phosphatidylserine decarboxylase proenzyme 2, mitochondrial, found in Schizosaccharomyces pombe (strain 972 / ATCC 24843) (Fission yeast).